A 395-amino-acid polypeptide reads, in one-letter code: Glutamyl-tRNA reductase (395 aa).

Substrate is bound by residues 45–48, serine 87, 92–94, and glutamine 98; these read TCNR and EDQ. Cysteine 46 (nucleophile) is an active-site residue. 167-172 provides a ligand contact to NADP(+); that stretch reads GAGEMG.

The protein belongs to the glutamyl-tRNA reductase family. Homodimer.

It carries out the reaction (S)-4-amino-5-oxopentanoate + tRNA(Glu) + NADP(+) = L-glutamyl-tRNA(Glu) + NADPH + H(+). It functions in the pathway porphyrin-containing compound metabolism; protoporphyrin-IX biosynthesis; 5-aminolevulinate from L-glutamyl-tRNA(Glu): step 1/2. In terms of biological role, catalyzes the NADPH-dependent reduction of glutamyl-tRNA(Glu) to glutamate 1-semialdehyde (GSA). In Methanosphaera stadtmanae (strain ATCC 43021 / DSM 3091 / JCM 11832 / MCB-3), this protein is Glutamyl-tRNA reductase.